A 60-amino-acid polypeptide reads, in one-letter code: Large ribosomal subunit protein uL30 (60 aa).

Belongs to the universal ribosomal protein uL30 family. In terms of assembly, part of the 50S ribosomal subunit.

The chain is Large ribosomal subunit protein uL30 from Cutibacterium acnes (strain DSM 16379 / KPA171202) (Propionibacterium acnes).